We begin with the raw amino-acid sequence, 301 residues long: tRNA dimethylallyltransferase (301 aa).

12–19 (GPTASGKT) provides a ligand contact to ATP. 14-19 (TASGKT) is a substrate binding site. Positions 37-40 (DSLS) are interaction with substrate tRNA.

Belongs to the IPP transferase family. In terms of assembly, monomer. Mg(2+) is required as a cofactor.

It carries out the reaction adenosine(37) in tRNA + dimethylallyl diphosphate = N(6)-dimethylallyladenosine(37) in tRNA + diphosphate. Functionally, catalyzes the transfer of a dimethylallyl group onto the adenine at position 37 in tRNAs that read codons beginning with uridine, leading to the formation of N6-(dimethylallyl)adenosine (i(6)A). The protein is tRNA dimethylallyltransferase of Sulfurovum sp. (strain NBC37-1).